The chain runs to 239 residues: Tumor necrosis factor ligand superfamily member 14 (239 aa).

Residues 1 to 37 lie on the Cytoplasmic side of the membrane; it reads MESVVQPSVFVVDGQTDIPFRRLEQNHRRRRCGTVQV. The helical; Signal-anchor for type II membrane protein transmembrane segment at 38 to 58 threads the bilayer; sequence SLALVLLLGAGLATQGWFLLR. The Extracellular segment spans residues 59–239; the sequence is LHQRLGDIVA…TRSYFGAFMV (181 aa). A THD domain is found at 92–239; sequence PAAHLTGANA…TRSYFGAFMV (148 aa). Asparagine 100 carries N-linked (GlcNAc...) asparagine glycosylation. A disulfide bridge links cysteine 152 with cysteine 187. The N-linked (GlcNAc...) asparagine glycan is linked to asparagine 191.

Belongs to the tumor necrosis factor family. Homotrimer. Interacts with TNFRSF14. In terms of processing, the soluble form derives from the membrane form by proteolytic processing.

It is found in the cell membrane. It localises to the secreted. In terms of biological role, cytokine that binds to TNFRSF3/LTBR. Binding to the decoy receptor TNFRSF6B modulates its effects. Activates NFKB and stimulates the proliferation of T-cells. Acts as a ligand for TNFRSF14/HVEM. Upon binding to TNFRSF14/HVEM, delivers costimulatory signals to T cells, leading to T cell proliferation and IFNG production. This is Tumor necrosis factor ligand superfamily member 14 (Tnfsf14) from Mus musculus (Mouse).